A 132-amino-acid chain; its full sequence is Small ribosomal subunit protein uS8 (132 aa).

The protein belongs to the universal ribosomal protein uS8 family. As to quaternary structure, part of the 30S ribosomal subunit. Contacts proteins S5 and S12.

In terms of biological role, one of the primary rRNA binding proteins, it binds directly to 16S rRNA central domain where it helps coordinate assembly of the platform of the 30S subunit. The polypeptide is Small ribosomal subunit protein uS8 (Leptospira biflexa serovar Patoc (strain Patoc 1 / Ames)).